The primary structure comprises 176 residues: MRRGRAPTFLLGGGAALLLSLFWMPTLLPAASRLLLLPRALLSMASGSPPAQPSSSSRSAYVPGSVSAAFVTCPNEKVAKEIARAVVEKRLACVNLVPQITSIYEWKGKIEEDSEVLMMIKTQSSLVPALTDFVRSVHPYEVAEVIALPVEQGNSPYLQWVRQVTESVPDSSTAPL.

Residues 1-30 form the signal peptide; that stretch reads MRRGRAPTFLLGGGAALLLSLFWMPTLLPA.

This sequence belongs to the CutA family. As to quaternary structure, homotrimer.

May form part of a complex of membrane proteins attached to acetylcholinesterase (AChE). The sequence is that of Protein CutA (CUTA) from Bos taurus (Bovine).